The following is a 188-amino-acid chain: dCTP deaminase (188 aa).

DCTP contacts are provided by residues 111–116 (KSTYAR), 135–137 (TLE), glutamine 156, tyrosine 170, and glutamine 180. Catalysis depends on glutamate 137, which acts as the Proton donor/acceptor.

Belongs to the dCTP deaminase family. As to quaternary structure, homotrimer.

It carries out the reaction dCTP + H2O + H(+) = dUTP + NH4(+). It functions in the pathway pyrimidine metabolism; dUMP biosynthesis; dUMP from dCTP (dUTP route): step 1/2. In terms of biological role, catalyzes the deamination of dCTP to dUTP. The polypeptide is dCTP deaminase (Pseudomonas savastanoi pv. phaseolicola (strain 1448A / Race 6) (Pseudomonas syringae pv. phaseolicola (strain 1448A / Race 6))).